Consider the following 122-residue polypeptide: Large ribosomal subunit protein uL14 (122 aa).

The protein belongs to the universal ribosomal protein uL14 family. Part of the 50S ribosomal subunit. Forms a cluster with proteins L3 and L19. In the 70S ribosome, L14 and L19 interact and together make contacts with the 16S rRNA in bridges B5 and B8.

Binds to 23S rRNA. Forms part of two intersubunit bridges in the 70S ribosome. The polypeptide is Large ribosomal subunit protein uL14 (Chlamydia caviae (strain ATCC VR-813 / DSM 19441 / 03DC25 / GPIC) (Chlamydophila caviae)).